We begin with the raw amino-acid sequence, 449 residues long: Metacaspase-1 (449 aa).

Residues 1-132 (MFPGQGRHTY…YSRPPTNQQS (132 aa)) form a disordered region. A compositionally biased stretch (low complexity) spans 10–26 (YGGQQQLLQLQQYNYGP). Pro residues predominate over residues 27 to 55 (PQGPPPNGYGPPPGPPPNGYGPPPGPPPQ). Polar residues predominate over residues 56–66 (NSWGYGNPSGT). Low complexity-rich tracts occupy residues 67–91 (QSSNQQRYQGQQSGQQNYNGGYQRP) and 98–112 (QSGNQRGQPGQNGEP). Positions 119–132 (GSGQYSRPPTNQQS) are enriched in polar residues. Catalysis depends on residues histidine 232 and cysteine 293.

Belongs to the peptidase C14B family.

Involved in cell death (apoptosis). The chain is Metacaspase-1 (MCA1) from Lodderomyces elongisporus (strain ATCC 11503 / CBS 2605 / JCM 1781 / NBRC 1676 / NRRL YB-4239) (Yeast).